The chain runs to 277 residues: Putative pyruvate, phosphate dikinase regulatory protein (277 aa).

Residue 151–158 participates in ADP binding; it reads GISRTSKT.

This sequence belongs to the pyruvate, phosphate/water dikinase regulatory protein family. PDRP subfamily.

The catalysed reaction is N(tele)-phospho-L-histidyl/L-threonyl-[pyruvate, phosphate dikinase] + ADP = N(tele)-phospho-L-histidyl/O-phospho-L-threonyl-[pyruvate, phosphate dikinase] + AMP + H(+). The enzyme catalyses N(tele)-phospho-L-histidyl/O-phospho-L-threonyl-[pyruvate, phosphate dikinase] + phosphate + H(+) = N(tele)-phospho-L-histidyl/L-threonyl-[pyruvate, phosphate dikinase] + diphosphate. In terms of biological role, bifunctional serine/threonine kinase and phosphorylase involved in the regulation of the pyruvate, phosphate dikinase (PPDK) by catalyzing its phosphorylation/dephosphorylation. In Alkaliphilus metalliredigens (strain QYMF), this protein is Putative pyruvate, phosphate dikinase regulatory protein.